The following is a 54-amino-acid chain: UPF0391 membrane protein PFL_0093 (54 aa).

A run of 2 helical transmembrane segments spans residues W4–A24 and G29–G49.

It belongs to the UPF0391 family.

It is found in the cell membrane. The polypeptide is UPF0391 membrane protein PFL_0093 (Pseudomonas fluorescens (strain ATCC BAA-477 / NRRL B-23932 / Pf-5)).